Reading from the N-terminus, the 194-residue chain is Imidazoleglycerol-phosphate dehydratase (194 aa).

The protein belongs to the imidazoleglycerol-phosphate dehydratase family.

It localises to the cytoplasm. The catalysed reaction is D-erythro-1-(imidazol-4-yl)glycerol 3-phosphate = 3-(imidazol-4-yl)-2-oxopropyl phosphate + H2O. It participates in amino-acid biosynthesis; L-histidine biosynthesis; L-histidine from 5-phospho-alpha-D-ribose 1-diphosphate: step 6/9. This chain is Imidazoleglycerol-phosphate dehydratase, found in Halalkalibacterium halodurans (strain ATCC BAA-125 / DSM 18197 / FERM 7344 / JCM 9153 / C-125) (Bacillus halodurans).